A 526-amino-acid chain; its full sequence is Methyltetrahydroprotoberberine 14-monooxygenase (526 aa).

The helical transmembrane segment at 14–34 (LLLQYLQPISVALVVIALVWN) threads the bilayer. Cys-468 contacts heme.

This sequence belongs to the cytochrome P450 family. Heme is required as a cofactor. As to expression, mainly expressed in roots, and barely in stems, leaves and carpels.

It is found in the membrane. The catalysed reaction is (S)-cis-N-methylcanadine + reduced [NADPH--hemoprotein reductase] + O2 = allocryptopine + oxidized [NADPH--hemoprotein reductase] + H2O + 2 H(+). It carries out the reaction (S)-cis-N-methylstylopine + reduced [NADPH--hemoprotein reductase] + O2 = protopine + oxidized [NADPH--hemoprotein reductase] + H2O + 2 H(+). The enzyme catalyses (S)-cis-N-methyltetrahydrothalifendine + reduced [NADPH--hemoprotein reductase] + O2 = 7-hydroxy-8-methoxy-11-methyl-17,19-dioxa-11-azatetracyclo[12.7.0.0(4,9).0(16,20)]henicosa-1(21),4(9),5,7,14,16(20)-hexaen-2-one + oxidized [NADPH--hemoprotein reductase] + H2O + 2 H(+). It catalyses the reaction (S)-cis-N-methyltetrahydropalmatine + reduced [NADPH--hemoprotein reductase] + O2 = muramine + oxidized [NADPH--hemoprotein reductase] + H2O + 2 H(+). The protein operates within alkaloid biosynthesis. Its activity is regulated as follows. Repressed by cytochrome P450 inhibitors ketoconazole, metyrapone, prochloraz, ancymidol and cytochrome C. Involved in the biosynthesis of the isoquinoline alkaloid sanguinarine. Catalyzes the conversion of N-methylated protoberberine alkaloids N-methylstylopine and N-methylcanadine into protopine and allocryptopine, respectively. Can also use (S)-cis-N-methyltetrahydrothalifendine and (S)-cis-N-methyltetrahydropalmatine as substrates. This Papaver somniferum (Opium poppy) protein is Methyltetrahydroprotoberberine 14-monooxygenase.